The sequence spans 232 residues: Ribosomal RNA large subunit methyltransferase E (232 aa).

The S-adenosyl-L-methionine site is built by glycine 64, tryptophan 66, aspartate 97, aspartate 113, and aspartate 138. Residue lysine 178 is the Proton acceptor of the active site.

It belongs to the class I-like SAM-binding methyltransferase superfamily. RNA methyltransferase RlmE family.

Its subcellular location is the cytoplasm. It carries out the reaction uridine(2552) in 23S rRNA + S-adenosyl-L-methionine = 2'-O-methyluridine(2552) in 23S rRNA + S-adenosyl-L-homocysteine + H(+). Its function is as follows. Specifically methylates the uridine in position 2552 of 23S rRNA at the 2'-O position of the ribose in the fully assembled 50S ribosomal subunit. The polypeptide is Ribosomal RNA large subunit methyltransferase E (Leptothrix cholodnii (strain ATCC 51168 / LMG 8142 / SP-6) (Leptothrix discophora (strain SP-6))).